A 321-amino-acid chain; its full sequence is Phosphate acyltransferase (321 aa).

The protein belongs to the PlsX family. In terms of assembly, homodimer. Probably interacts with PlsY.

The protein localises to the cytoplasm. It carries out the reaction a fatty acyl-[ACP] + phosphate = an acyl phosphate + holo-[ACP]. Its pathway is lipid metabolism; phospholipid metabolism. In terms of biological role, catalyzes the reversible formation of acyl-phosphate (acyl-PO(4)) from acyl-[acyl-carrier-protein] (acyl-ACP). This enzyme utilizes acyl-ACP as fatty acyl donor, but not acyl-CoA. The protein is Phosphate acyltransferase of Chlamydia trachomatis serovar A (strain ATCC VR-571B / DSM 19440 / HAR-13).